The chain runs to 64 residues: Large ribosomal subunit protein bL35 (64 aa).

A disordered region spans residues 19–41; the sequence is SGKVKRERMNGSHNLEHKNRKRT. The span at 25-35 shows a compositional bias: basic and acidic residues; the sequence is ERMNGSHNLEH.

Belongs to the bacterial ribosomal protein bL35 family.

The protein is Large ribosomal subunit protein bL35 of Chlorobaculum tepidum (strain ATCC 49652 / DSM 12025 / NBRC 103806 / TLS) (Chlorobium tepidum).